Reading from the N-terminus, the 106-residue chain is Large ribosomal subunit protein eL42 (106 aa).

Belongs to the eukaryotic ribosomal protein eL42 family.

In Meyerozyma guilliermondii (strain ATCC 6260 / CBS 566 / DSM 6381 / JCM 1539 / NBRC 10279 / NRRL Y-324) (Yeast), this protein is Large ribosomal subunit protein eL42 (RPL44).